Reading from the N-terminus, the 718-residue chain is Putative proline-rich receptor-like protein kinase PERK11 (718 aa).

The interval 1 to 256 (MDKVQQQADL…GGTSQQSNES (256 aa)) is disordered. Topologically, residues 1-262 (MDKVQQQADL…SNESNYTEKT (262 aa)) are extracellular. 3 stretches are compositionally biased toward pro residues: residues 45-105 (ATSP…PPQS), 115-132 (IPFPKPQLPPPSLFPPPS), and 157-167 (LPSPPSTPFSP). Composition is skewed to low complexity over residues 168–203 (PSQENSGSQGSPPLSSLLPPMLPLNPNSPGNPLQPL) and 211–244 (SNRVPSSSSSPSPPSLSGSNNHSGGSNRHNANSN). 3 N-linked (GlcNAc...) asparagine glycosylation sites follow: asparagine 231, asparagine 254, and asparagine 257. A helical membrane pass occupies residues 263–283 (VIGIGIAGVLVILFIAGVFFV). Over 284 to 718 (RRKQKKGSSS…RAFNTSHRNH (435 aa)) the chain is Cytoplasmic. Residues 314–348 (HYRQKPGNGNSSAQNSSPDTNSLGNPKHGRGTPDS) form a disordered region. Residues 320–337 (GNGNSSAQNSSPDTNSLG) show a composition bias toward polar residues. A Phosphothreonine modification is found at threonine 359. One can recognise a Protein kinase domain in the interval 370–649 (FCKSFVVGEG…VRALDTRDDL (280 aa)). Residues 376 to 384 (VGEGGFGCV) and lysine 398 each bind ATP. At tyrosine 443 the chain carries Phosphotyrosine. Aspartate 494 serves as the catalytic Proton acceptor. Serine 498 and serine 527 each carry phosphoserine. 2 positions are modified to phosphothreonine: threonine 528 and threonine 533. Phosphotyrosine is present on tyrosine 541. Residues 683–718 (SSDLGTNTGYYPSQDYATSHEYESESRAFNTSHRNH) are disordered. 2 stretches are compositionally biased toward polar residues: residues 685 to 699 (DLGTNTGYYPSQDYA) and 709 to 718 (RAFNTSHRNH).

The protein belongs to the protein kinase superfamily. Ser/Thr protein kinase family. As to expression, mostly expressed in flower buds.

It localises to the cell membrane. The catalysed reaction is L-seryl-[protein] + ATP = O-phospho-L-seryl-[protein] + ADP + H(+). It catalyses the reaction L-threonyl-[protein] + ATP = O-phospho-L-threonyl-[protein] + ADP + H(+). In Arabidopsis thaliana (Mouse-ear cress), this protein is Putative proline-rich receptor-like protein kinase PERK11 (PERK11).